The primary structure comprises 226 residues: MAITLSNVNSEAGLQKLDEYLLTRSYISGYQASKDDMTVFTSLPSAPAASYVNVTRWYDHISALLRSSGVTAEGEGVKVESTACSVSPTADQKAPAADEEDDDDVDLFGEETEEEKKAAEERAAAVKASGKKKESGKSSVLLDVKPWDDETDMAKLEEAVRNVKMEGLLWGASKLVPVGYGIKKLQIMMTIVDDLVSVDSLIEDYFYTEPANEFIQSCDIVAFNKI.

The interval 82–131 (TACSVSPTADQKAPAADEEDDDDVDLFGEETEEEKKAAEERAAAVKASGK) is disordered. Residues 97–113 (ADEEDDDDVDLFGEETE) show a composition bias toward acidic residues. A compositionally biased stretch (basic and acidic residues) spans 114–124 (EEKKAAEERAA).

This sequence belongs to the EF-1-beta/EF-1-delta family. In terms of assembly, EF-1 is composed of 4 subunits: alpha, beta (1B-alpha=beta'), delta (1B-beta), and gamma (1B-gamma).

EF-1-beta and EF-1-beta' stimulate the exchange of GDP bound to EF-1-alpha to GTP. In Oryza sativa subsp. japonica (Rice), this protein is Elongation factor 1-delta 2.